We begin with the raw amino-acid sequence, 62 residues long: UPF0291 protein CLJ_B2839 (62 aa).

This sequence belongs to the UPF0291 family.

The protein localises to the cytoplasm. The polypeptide is UPF0291 protein CLJ_B2839 (Clostridium botulinum (strain 657 / Type Ba4)).